A 421-amino-acid polypeptide reads, in one-letter code: Medium-chain specific acyl-CoA dehydrogenase, mitochondrial (421 aa).

The N-terminal 25 residues, 1-25 (MAAMFRRSCRVLRSLSHFGWRSQHT), are a transit peptide targeting the mitochondrion. Position 79 is an N6-acetyllysine (Lys79). 158-167 (YCVTEPGAGS) contacts FAD. Ser167 lines the octanoyl-CoA pocket. N6-succinyllysine is present on Lys179. 191-193 (WIT) lines the FAD pocket. Lys212 is subject to N6-acetyllysine; alternate. Position 212 is an N6-succinyllysine; alternate (Lys212). Octanoyl-CoA is bound at residue Ser216. N6-acetyllysine; alternate occurs at positions 217, 259, and 271. N6-succinyllysine; alternate occurs at positions 217, 259, and 271. Asp278 provides a ligand contact to octanoyl-CoA. The residue at position 279 (Lys279) is an N6-acetyllysine. An octanoyl-CoA-binding site is contributed by Arg281. Lys301 carries the post-translational modification N6-acetyllysine. FAD-binding positions include 306-308 (RKT) and 316-317 (HQ). 2 residues coordinate octanoyl-CoA: Arg349 and Thr351. The residue at position 351 (Thr351) is a Phosphothreonine. 374 to 378 (QVFGG) is an FAD binding site. Glu401 contributes to the octanoyl-CoA binding site. The active-site Proton acceptor is the Glu401. 402-405 (GTAQ) contributes to the FAD binding site.

Belongs to the acyl-CoA dehydrogenase family. Homotetramer. Interacts with the heterodimeric electron transfer flavoprotein ETF. It depends on FAD as a cofactor. Post-translationally, acetylated. Could occur at proximity of the cofactor-binding sites and reduce the catalytic activity. Could be deacetylated by SIRT3.

The protein localises to the mitochondrion matrix. It catalyses the reaction a medium-chain 2,3-saturated fatty acyl-CoA + oxidized [electron-transfer flavoprotein] + H(+) = a medium-chain (2E)-enoyl-CoA + reduced [electron-transfer flavoprotein]. The enzyme catalyses pentanoyl-CoA + oxidized [electron-transfer flavoprotein] + H(+) = (2E)-pentenoyl-CoA + reduced [electron-transfer flavoprotein]. It carries out the reaction hexanoyl-CoA + oxidized [electron-transfer flavoprotein] + H(+) = (2E)-hexenoyl-CoA + reduced [electron-transfer flavoprotein]. The catalysed reaction is octanoyl-CoA + oxidized [electron-transfer flavoprotein] + H(+) = (2E)-octenoyl-CoA + reduced [electron-transfer flavoprotein]. It catalyses the reaction decanoyl-CoA + oxidized [electron-transfer flavoprotein] + H(+) = (2E)-decenoyl-CoA + reduced [electron-transfer flavoprotein]. The enzyme catalyses dodecanoyl-CoA + oxidized [electron-transfer flavoprotein] + H(+) = (2E)-dodecenoyl-CoA + reduced [electron-transfer flavoprotein]. It carries out the reaction tetradecanoyl-CoA + oxidized [electron-transfer flavoprotein] + H(+) = (2E)-tetradecenoyl-CoA + reduced [electron-transfer flavoprotein]. The catalysed reaction is oxidized [electron-transfer flavoprotein] + hexadecanoyl-CoA + H(+) = (2E)-hexadecenoyl-CoA + reduced [electron-transfer flavoprotein]. It participates in lipid metabolism; mitochondrial fatty acid beta-oxidation. In terms of biological role, medium-chain specific acyl-CoA dehydrogenase is one of the acyl-CoA dehydrogenases that catalyze the first step of mitochondrial fatty acid beta-oxidation, an aerobic process breaking down fatty acids into acetyl-CoA and allowing the production of energy from fats. The first step of fatty acid beta-oxidation consists in the removal of one hydrogen from C-2 and C-3 of the straight-chain fatty acyl-CoA thioester, resulting in the formation of trans-2-enoyl-CoA. Electron transfer flavoprotein (ETF) is the electron acceptor that transfers electrons to the main mitochondrial respiratory chain via ETF-ubiquinone oxidoreductase (ETF dehydrogenase). Among the different mitochondrial acyl-CoA dehydrogenases, medium-chain specific acyl-CoA dehydrogenase acts specifically on acyl-CoAs with saturated 6 to 12 carbons long primary chains. This Sus scrofa (Pig) protein is Medium-chain specific acyl-CoA dehydrogenase, mitochondrial.